Consider the following 143-residue polypeptide: SsrA-binding protein (143 aa).

Belongs to the SmpB family.

It is found in the cytoplasm. Functionally, required for rescue of stalled ribosomes mediated by trans-translation. Binds to transfer-messenger RNA (tmRNA), required for stable association of tmRNA with ribosomes. tmRNA and SmpB together mimic tRNA shape, replacing the anticodon stem-loop with SmpB. tmRNA is encoded by the ssrA gene; the 2 termini fold to resemble tRNA(Ala) and it encodes a 'tag peptide', a short internal open reading frame. During trans-translation Ala-aminoacylated tmRNA acts like a tRNA, entering the A-site of stalled ribosomes, displacing the stalled mRNA. The ribosome then switches to translate the ORF on the tmRNA; the nascent peptide is terminated with the 'tag peptide' encoded by the tmRNA and targeted for degradation. The ribosome is freed to recommence translation, which seems to be the essential function of trans-translation. The sequence is that of SsrA-binding protein from Mycoplasmoides gallisepticum (strain R(low / passage 15 / clone 2)) (Mycoplasma gallisepticum).